A 734-amino-acid polypeptide reads, in one-letter code: Photosystem I P700 chlorophyll a apoprotein A2 (734 aa).

Helical transmembrane passes span 46–69 (IFASHFGHLAIIFLWTSGNLFHVA), 135–158 (LYTGALFLLVLSAILLFGGWLHLQ), 175–199 (LNHHLSGLFGVSSLAWTGHLVHVAI), 273–291 (MAHHHLAIAVVFIVAGHMY), 330–353 (LHMQLGLALAALGVITSLVAQHMY), 369–395 (ASLYTHHQYIAGFLMVGAFAHGAIFFV), 417–439 (AIISHLSWVTLFLGFHTLGLYVH), and 517–535 (FLVHHAIALGLHTTALILV). C559 and C568 together coordinate [4Fe-4S] cluster. The next 2 helical transmembrane spans lie at 575 to 596 (AFYLAVFWMLNTIGWVTFYWHW) and 643 to 665 (LSVWSWMFLFGHLVWATGFMFLI). Residues H654, M662, and Y670 each coordinate chlorophyll a. W671 is a binding site for phylloquinone. The helical transmembrane segment at 707 to 727 (LVGLAHFSVGYVLTYAAFVLA) threads the bilayer.

It belongs to the PsaA/PsaB family. In terms of assembly, the PsaA/B heterodimer binds the P700 chlorophyll special pair and subsequent electron acceptors. PSI consists of a core antenna complex that captures photons, and an electron transfer chain that converts photonic excitation into a charge separation. The eukaryotic PSI reaction center is composed of at least 11 subunits. Requires P700 is a chlorophyll a/chlorophyll a' dimer, A0 is one or more chlorophyll a, A1 is one or both phylloquinones and FX is a shared 4Fe-4S iron-sulfur center. as cofactor.

The protein resides in the plastid. It localises to the chloroplast thylakoid membrane. The catalysed reaction is reduced [plastocyanin] + hnu + oxidized [2Fe-2S]-[ferredoxin] = oxidized [plastocyanin] + reduced [2Fe-2S]-[ferredoxin]. In terms of biological role, psaA and PsaB bind P700, the primary electron donor of photosystem I (PSI), as well as the electron acceptors A0, A1 and FX. PSI is a plastocyanin/cytochrome c6-ferredoxin oxidoreductase, converting photonic excitation into a charge separation, which transfers an electron from the donor P700 chlorophyll pair to the spectroscopically characterized acceptors A0, A1, FX, FA and FB in turn. Oxidized P700 is reduced on the lumenal side of the thylakoid membrane by plastocyanin or cytochrome c6. The sequence is that of Photosystem I P700 chlorophyll a apoprotein A2 from Porphyra purpurea (Red seaweed).